A 157-amino-acid polypeptide reads, in one-letter code: SsrA-binding protein (157 aa).

The protein belongs to the SmpB family.

Its subcellular location is the cytoplasm. Functionally, required for rescue of stalled ribosomes mediated by trans-translation. Binds to transfer-messenger RNA (tmRNA), required for stable association of tmRNA with ribosomes. tmRNA and SmpB together mimic tRNA shape, replacing the anticodon stem-loop with SmpB. tmRNA is encoded by the ssrA gene; the 2 termini fold to resemble tRNA(Ala) and it encodes a 'tag peptide', a short internal open reading frame. During trans-translation Ala-aminoacylated tmRNA acts like a tRNA, entering the A-site of stalled ribosomes, displacing the stalled mRNA. The ribosome then switches to translate the ORF on the tmRNA; the nascent peptide is terminated with the 'tag peptide' encoded by the tmRNA and targeted for degradation. The ribosome is freed to recommence translation, which seems to be the essential function of trans-translation. The polypeptide is SsrA-binding protein (Methylobacterium nodulans (strain LMG 21967 / CNCM I-2342 / ORS 2060)).